Reading from the N-terminus, the 230-residue chain is Thioredoxin domain-containing protein PLP3A (230 aa).

One can recognise a Thioredoxin domain in the interval 89 to 173; sequence VSEGDFLGEV…GVAMDRLVGF (85 aa). The interval 197-230 is disordered; sequence LSKKKKEEDDEDAEYQESIRRSVRSSENLDSDSD.

Belongs to the phosducin family. Interacts with TUBB2, TUBB3, TUBB4 and TUBB5. Expressed in embryos, shoot meristems, leaf primordia, root meristems, floral meristems and young floral buds.

It is found in the cytoplasm. It localises to the nucleus. Tubulin-binding protein involved in microtubule formation. The polypeptide is Thioredoxin domain-containing protein PLP3A (PLP3A) (Arabidopsis thaliana (Mouse-ear cress)).